The sequence spans 944 residues: Valine--tRNA ligase (944 aa).

The 'HIGH' region signature appears at 43–53 (PNVTGTLHMGH). The 'KMSKS' region signature appears at 550 to 554 (KMSKS). K553 contributes to the ATP binding site. Positions 878 to 942 (LVDMDAERTR…QLTGLREQRA (65 aa)) form a coiled coil.

This sequence belongs to the class-I aminoacyl-tRNA synthetase family. ValS type 1 subfamily. In terms of assembly, monomer.

It is found in the cytoplasm. The enzyme catalyses tRNA(Val) + L-valine + ATP = L-valyl-tRNA(Val) + AMP + diphosphate. Functionally, catalyzes the attachment of valine to tRNA(Val). As ValRS can inadvertently accommodate and process structurally similar amino acids such as threonine, to avoid such errors, it has a 'posttransfer' editing activity that hydrolyzes mischarged Thr-tRNA(Val) in a tRNA-dependent manner. The chain is Valine--tRNA ligase from Xanthomonas axonopodis pv. citri (strain 306).